The primary structure comprises 184 residues: Isopentenyl-diphosphate Delta-isomerase (184 aa).

2 residues coordinate Mn(2+): H25 and H32. Residues 30 to 164 (PLHLAFSCWL…PWAFSPWMVL (135 aa)) enclose the Nudix hydrolase domain. The active site involves C67. H69 contributes to the Mn(2+) binding site. E87 serves as a coordination point for Mg(2+). 2 residues coordinate Mn(2+): E114 and E116. E116 is a catalytic residue.

The protein belongs to the IPP isomerase type 1 family. Homodimer. The cofactor is Mg(2+). Mn(2+) serves as cofactor.

It localises to the cytoplasm. It catalyses the reaction isopentenyl diphosphate = dimethylallyl diphosphate. The protein operates within isoprenoid biosynthesis; dimethylallyl diphosphate biosynthesis; dimethylallyl diphosphate from isopentenyl diphosphate: step 1/1. Its function is as follows. Catalyzes the 1,3-allylic rearrangement of the homoallylic substrate isopentenyl (IPP) to its highly electrophilic allylic isomer, dimethylallyl diphosphate (DMAPP). The protein is Isopentenyl-diphosphate Delta-isomerase of Klebsiella pneumoniae (strain 342).